The chain runs to 184 residues: Adenine phosphoribosyltransferase (184 aa).

It belongs to the purine/pyrimidine phosphoribosyltransferase family. In terms of assembly, homodimer.

It is found in the cytoplasm. The enzyme catalyses AMP + diphosphate = 5-phospho-alpha-D-ribose 1-diphosphate + adenine. Its pathway is purine metabolism; AMP biosynthesis via salvage pathway; AMP from adenine: step 1/1. Its function is as follows. Catalyzes a salvage reaction resulting in the formation of AMP, that is energically less costly than de novo synthesis. This Mycobacterium marinum (strain ATCC BAA-535 / M) protein is Adenine phosphoribosyltransferase.